Consider the following 719-residue polypeptide: Pesticidal crystal protein Cry1Id (719 aa).

Belongs to the delta endotoxin family.

Promotes colloidosmotic lysis by binding to the midgut epithelial cells of many lepidopteran larvae. Active on Plutella xylostella and on Bombyx mori. In Bacillus thuringiensis, this protein is Pesticidal crystal protein Cry1Id (cry1Id).